The following is a 428-amino-acid chain: C4-dicarboxylate transport protein 1 (428 aa).

A run of 8 helical transmembrane segments spans residues 5–27 (FYKILYVQVLAAIVIGVLLGHFE), 42–64 (IQLIKMVIGPIIFCTVVSGIAGM), 77–99 (ALLYFEVVSTFALVIGLVAGHIF), 150–167 (ILQILLIALLFGGALSAM), 188–210 (IVHVITRVAPIGAFGAMAFTIGK), 225–247 (TFYLTAIIFVVVVLGIIARLTGF), 314–336 (IFISQALNIELTLTQQLTILAVA), and 351–373 (FITLAATLAVVPTIPVAGMVLIL).

Belongs to the dicarboxylate/amino acid:cation symporter (DAACS) (TC 2.A.23) family.

The protein resides in the cell inner membrane. Its function is as follows. Responsible for the transport of dicarboxylates such as succinate, fumarate, and malate from the periplasm across the membrane. The polypeptide is C4-dicarboxylate transport protein 1 (dctA1) (Ralstonia nicotianae (strain ATCC BAA-1114 / GMI1000) (Ralstonia solanacearum)).